The following is a 636-amino-acid chain: uncharacterized protein (636 aa).

2 disordered regions span residues 1–22 (MYNV…NEIG) and 81–107 (SSQT…PQNN). The Cytoplasmic portion of the chain corresponds to 1-170 (MYNVRGDLNR…YFVGGEGLMQ (170 aa)). A helical; Signal-anchor for type II membrane protein membrane pass occupies residues 171–191 (LLFLLFLAAGTGMLFIGLPIL). Topologically, residues 192 to 636 (TYTGHNSLAS…RPKNSLMDGC (445 aa)) are lumenal. A GH16 domain is found at 218 to 587 (LRYGSLIDPD…YVRIYQDSSD (370 aa)). N-linked (GlcNAc...) asparagine glycans are attached at residues Asn291, Asn378, Asn429, Asn464, Asn489, and Asn616.

This sequence belongs to the SKN1/KRE6 family.

Its subcellular location is the endoplasmic reticulum membrane. In terms of biological role, required for synthesis of the major beta-glucans of the yeast cell wall. This is an uncharacterized protein from Schizosaccharomyces pombe (strain 972 / ATCC 24843) (Fission yeast).